The sequence spans 105 residues: Ig lambda-1 chain C region (105 aa).

One can recognise an Ig-like domain in the interval 6-100 (PSVTLFPPSS…EGHTVEKSLS (95 aa)). The cysteines at positions 27 and 86 are disulfide-linked.

This is Ig lambda-1 chain C region from Mus musculus (Mouse).